A 390-amino-acid chain; its full sequence is 3-ketoacyl-CoA thiolase (390 aa).

Residue C95 is the Acyl-thioester intermediate of the active site. Active-site proton acceptor residues include H346 and C376.

This sequence belongs to the thiolase-like superfamily. Thiolase family. Heterotetramer of two alpha chains (FadB) and two beta chains (FadA).

It is found in the cytoplasm. It carries out the reaction an acyl-CoA + acetyl-CoA = a 3-oxoacyl-CoA + CoA. The protein operates within lipid metabolism; fatty acid beta-oxidation. In terms of biological role, catalyzes the final step of fatty acid oxidation in which acetyl-CoA is released and the CoA ester of a fatty acid two carbons shorter is formed. The polypeptide is 3-ketoacyl-CoA thiolase (Psychrobacter arcticus (strain DSM 17307 / VKM B-2377 / 273-4)).